A 360-amino-acid chain; its full sequence is Protein phosphatase 1 regulatory subunit 7 (360 aa).

Residues 1 to 63 (MAAERGAGQQ…RGAEDPEEEH (63 aa)) form a disordered region. Ala-2 is modified (N-acetylalanine). A phosphoserine mark is found at Ser-12, Ser-24, Ser-27, Ser-44, and Ser-47. A compositionally biased stretch (basic and acidic residues) spans 17-34 (EVDRRVESEESGDEEGKK). LRR repeat units follow at residues 77-98 (DAEDVDLNHYRIGKIEGFEVLK), 99-120 (KVKSLCLRQNLIKCIENLDELQ), 121-142 (SLRELDLYDNQIKKIENLEALT), 143-164 (ELEVLDISFNLLRNIEGIDKLT), 165-186 (QLKKLFLVNNKINKIENISTLQ), 187-208 (QLQMLELGSNRIRAIENIDTLT), 209-230 (NLESLFLGKNKITKLQNLDALS), 231-252 (NLTVLSMQSNRLTKIEGLQNLV), 253-274 (NLRELYLSHNGIEVIEGLENNN), 275-296 (KLTMLDIASNRIKKIENISHLT), and 297-318 (ELQEFWMNDNLLESWSDLDELK). Residue Ser-322 is modified to Phosphoserine. Residues 331–360 (NPLQKDPQYRRKVMLALPSVRQIDATFVRF) enclose the LRRCT domain.

It belongs to the SDS22 family. Interacts with PPP1CA, PPP1CB and PPP1CC/PPP1G.

The protein localises to the nucleus. Functionally, regulatory subunit of protein phosphatase 1. This is Protein phosphatase 1 regulatory subunit 7 (Ppp1r7) from Rattus norvegicus (Rat).